Reading from the N-terminus, the 164-residue chain is ATP synthase subunit b (164 aa).

The chain crosses the membrane as a helical span at residues 10–32 (SAAMLMLFVLMVYFLNKFLYTPF).

This sequence belongs to the ATPase B chain family. F-type ATPases have 2 components, F(1) - the catalytic core - and F(0) - the membrane proton channel. F(1) has five subunits: alpha(3), beta(3), gamma(1), delta(1), epsilon(1). F(0) has three main subunits: a(1), b(2) and c(10-14). The alpha and beta chains form an alternating ring which encloses part of the gamma chain. F(1) is attached to F(0) by a central stalk formed by the gamma and epsilon chains, while a peripheral stalk is formed by the delta and b chains.

It is found in the cell inner membrane. Functionally, f(1)F(0) ATP synthase produces ATP from ADP in the presence of a proton or sodium gradient. F-type ATPases consist of two structural domains, F(1) containing the extramembraneous catalytic core and F(0) containing the membrane proton channel, linked together by a central stalk and a peripheral stalk. During catalysis, ATP synthesis in the catalytic domain of F(1) is coupled via a rotary mechanism of the central stalk subunits to proton translocation. In terms of biological role, component of the F(0) channel, it forms part of the peripheral stalk, linking F(1) to F(0). The chain is ATP synthase subunit b from Thermotoga maritima (strain ATCC 43589 / DSM 3109 / JCM 10099 / NBRC 100826 / MSB8).